The sequence spans 463 residues: Cysteine--tRNA ligase (463 aa).

Residue Cys-27 participates in Zn(2+) binding. Residues 29 to 39 (PTVYGLIHIGN) carry the 'HIGH' region motif. Residues Cys-207, His-232, and Glu-236 each coordinate Zn(2+). The short motif at 264 to 268 (KMSKS) is the 'KMSKS' region element. Lys-267 contributes to the ATP binding site.

It belongs to the class-I aminoacyl-tRNA synthetase family. As to quaternary structure, monomer. Zn(2+) is required as a cofactor.

The protein resides in the cytoplasm. The catalysed reaction is tRNA(Cys) + L-cysteine + ATP = L-cysteinyl-tRNA(Cys) + AMP + diphosphate. This is Cysteine--tRNA ligase from Pseudothermotoga lettingae (strain ATCC BAA-301 / DSM 14385 / NBRC 107922 / TMO) (Thermotoga lettingae).